The sequence spans 289 residues: G1/S-specific cyclin-D2 (289 aa).

Positions 26-151 (VLQNLLTIEE…VVLGKLKWNL (126 aa)) constitute a Cyclin N-terminal domain. Positions 264-289 (DQGDGSKSEDELDQASTPTDVRDIDL) are disordered. S271 is subject to Phosphoserine. Position 280 is a phosphothreonine (T280).

Belongs to the cyclin family. Cyclin D subfamily. Interacts with either CDK4 or CDK6 protein kinase to form a serine/threonine kinase holoenzyme complex. The cyclin subunit imparts substrate specificity to the complex. Post-translationally, phosphorylation at Thr-280 by MAP kinases is required for ubiquitination and degradation by the DCX(AMBRA1) complex. Ubiquitinated by the DCX(AMBRA1) complex during the transition from G1 to S cell phase, leading to its degradation: ubiquitination is dependent on Thr-280 phosphorylation. The DCX(AMBRA1) complex represents the major regulator of CCND2 stability during the G1/S transition. Polyubiquitinated by the SCF(FBXL2) complex, leading to proteasomal degradation.

It localises to the nucleus. It is found in the cytoplasm. The protein localises to the nucleus membrane. Its function is as follows. Regulatory component of the cyclin D2-CDK4 (DC) complex that phosphorylates and inhibits members of the retinoblastoma (RB) protein family including RB1 and regulates the cell-cycle during G(1)/S transition. Phosphorylation of RB1 allows dissociation of the transcription factor E2F from the RB/E2F complex and the subsequent transcription of E2F target genes which are responsible for the progression through the G(1) phase. Hypophosphorylates RB1 in early G(1) phase. Cyclin D-CDK4 complexes are major integrators of various mitogenenic and antimitogenic signals. The chain is G1/S-specific cyclin-D2 (CCND2) from Bos taurus (Bovine).